Here is a 740-residue protein sequence, read N- to C-terminus: F-BAR and double SH3 domains protein 2 (740 aa).

In terms of domain architecture, F-BAR spans V8–N282. Residues P303 to S323 form a disordered region. Residues D307 to S323 show a composition bias toward basic and acidic residues. A coiled-coil region spans residues G356–Q397. 2 consecutive SH3 domains span residues N469–S530 and A567–A629. The required and sufficient for location at clathrin-coated pits stretch occupies residues A567–A629. Polar residues predominate over residues A629–P645. Positions A629 to V740 are disordered. The segment covering S646–P657 has biased composition (pro residues). Residues S675 and S681 each carry the phosphoserine modification. The segment covering S675–T706 has biased composition (polar residues).

As to quaternary structure, homodimer. Interacts (via SH3 domain 2) with ITSN1 (via SH3 domain 4). Recruited to clathrin-coated pits during a mid-to-late stage of assembly via interaction with ITSN1. Interacts (via SH3 domain 1) with WASL. Interacts with WAS. Interacts with CASK and MAGI1. CASK inhibits interaction with MAGI1. Phosphorylated. Phosphorylation on a Ser residue is important for recruitment to the cell membrane and for its role in promoting endocytosis. In terms of tissue distribution, detected in inner ear vestibula and in stereocilia in cochlear hair cell bundles (at protein level). Ubiquitous. Detected in testis, liver, brain cortex, cerebellum, kidney, organ of Corti, utricle, spiral ganglion, tongue and eye.

It is found in the cytoplasm. The protein resides in the cell junction. It localises to the membrane. Its subcellular location is the clathrin-coated pit. The protein localises to the cell membrane. It is found in the cell projection. The protein resides in the stereocilium. Adapter protein that plays a role in endocytosis via clathrin-coated pits. Contributes to the internalization of cell surface receptors, such as integrin ITGB1 and transferrin receptor. Promotes endocytosis of EGFR in cancer cells, and thereby contributes to the down-regulation of EGFR signaling. Recruited to clathrin-coated pits during a mid-to-late stage of assembly, where it is required for normal progress from U-shaped intermediate stage pits to terminal, omega-shaped pits. Binds to membranes enriched in phosphatidylinositol 3,4-bisphosphate or phosphatidylinositol 3,4,5-trisphosphate. When bound to membranes, promotes actin polymerization via its interaction with WAS and/or WASL which leads to the activation of the Arp2/3 complex. Does not promote actin polymerisation in the absence of membranes. This is F-BAR and double SH3 domains protein 2 (Fchsd2) from Mus musculus (Mouse).